Reading from the N-terminus, the 1500-residue chain is Rho GTPase-activating protein 35 (1500 aa).

The has GTPase activity, required for proper localization stretch occupies residues 1-266 (MMMARKQDVR…IPYFEALKQQ (266 aa)). GTP-binding positions include Lys28, 33–37 (IGKSC), Leu52, Ser56, 95–97 (EQT), 201–203 (KCD), and 229–231 (SAR). FF domains lie at 270 to 327 (IATA…HIHR), 368 to 422 (KLLE…HLEK), 429 to 483 (RAEM…HQKQ), and 485 to 550 (IDKA…HIHF). The residue at position 308 (Tyr308) is a Phosphotyrosine. Ser589 carries the post-translational modification Phosphoserine. Positions 592 to 767 (DPNIDRINLV…LLDSKRNLNL (176 aa)) constitute a pG1 pseudoGTPase domain. 2 positions are modified to phosphoserine: Ser770 and Ser773. One can recognise a pG2 pseudoGTPase domain in the interval 783-947 (RIVMCLMCGD…FKDVVDKKNI (165 aa)). A phosphoserine mark is found at Ser970, Ser975, Ser985, Ser1002, and Ser1073. Positions 970-989 (SPRAGSPLCNSNLQDSEEDI) are disordered. Residues 1058-1090 (SYLDQGHRDGQRKSVSSSTWLPPDGFDPSDYAE) are disordered. At Tyr1088 the chain carries Phosphotyrosine. Phosphotyrosine; by ABL2 and PTK6 is present on Tyr1106. A compositionally biased stretch (polar residues) spans 1125–1142 (KAQSNGSGNGSDSEMDTS). Residues 1125–1147 (KAQSNGSGNGSDSEMDTSSLERG) are disordered. Phosphoserine occurs at positions 1135, 1143, 1151, 1177, 1180, and 1222. A disordered region spans residues 1178-1208 (VGSDDELGPIRKKEEDQASQGYKGDNAVIPY). Residues 1214–1237 (PRRRNILRSLRRNTKKPKPKPRPS) are required for phospholipid binding and regulation of the substrate preference. Thr1227 bears the Phosphothreonine mark. Residue Ser1237 is modified to Phosphoserine. The Rho-GAP domain occupies 1250–1437 (VPLTTVVTPE…LFIQQCPFFF (188 aa)). The disordered stretch occupies residues 1444 to 1500 (EPPGATPSSPSAVASTVPFLTSTPVTSQPSPPQSPPPTPQSPMQALLPSQLQAEHTL). The segment covering 1449-1471 (TPSSPSAVASTVPFLTSTPVTSQ) has biased composition (low complexity). The segment covering 1472–1483 (PSPPQSPPPTPQ) has biased composition (pro residues). Phosphoserine occurs at positions 1473 and 1477. Thr1481 carries the phosphothreonine modification. Ser1484 bears the Phosphoserine mark. Positions 1490–1500 (LPSQLQAEHTL) are enriched in polar residues.

Interacts with RASA1. Interacts with the general transcription factor GTF2I, the interaction sequesters GTF2I in the cytoplasm. Phosphorylation of Tyr-1106 by PTK6 promotes the association with RASA1, inactivating RHOA while activating RAS. Phosphorylation at Tyr-308 by PDGFRA inhibits binding to GTF2I. Phosphorylated by PRKCA at Ser-1222 and Thr-1227, induces relocalization from the cytoplasm to regions of plasma membrane ruffling and prevents the binding and substrate specificity regulation by phospholipids. In brain, phosphorylated by FYN and SRC. During focal adhesion formation, phosphorylated by MAPK1 and MAPK3 at the C-terminal region, probably at Ser-1452, Ser-1477, Thr-1481 and Ser-1484. Phosphorylation by MAPK1 and MAPK3 inhibits GAP function and localizes ARGHAP35 away from newly forming focal adhesions and stress fibers in cells spreading on fibronectin. Phosphorylation at Ser-1477 and Thr-1481 by GSK3B requires priming by MAPK and inhibits RhoGAP activity and modulates polarized cell migration. As to expression, strongly expressed in retina (photoreceptor layer) and brain. Expression is maximal in the occipital, frontal, temporal lobe and also the cerebellum. Medium expression in the medulla and also in kidney, lung, liver, heart and spleen.

It is found in the cytoplasm. The protein localises to the cytoskeleton. The protein resides in the cilium basal body. Its subcellular location is the nucleus. It localises to the cell membrane. Its function is as follows. Rho GTPase-activating protein (GAP). Binds several acidic phospholipids which inhibits the Rho GAP activity to promote the Rac GAP activity. This binding is inhibited by phosphorylation by PRKCA. Involved in cell differentiation as well as cell adhesion and migration, plays an important role in retinal tissue morphogenesis, neural tube fusion, midline fusion of the cerebral hemispheres and mammary gland branching morphogenesis. Transduces signals from p21-ras to the nucleus, acting via the ras GTPase-activating protein (GAP). Transduces SRC-dependent signals from cell-surface adhesion molecules, such as laminin, to promote neurite outgrowth. Regulates axon outgrowth, guidance and fasciculation. Modulates Rho GTPase-dependent F-actin polymerization, organization and assembly, is involved in polarized cell migration and in the positive regulation of ciliogenesis and cilia elongation. During mammary gland development, is required in both the epithelial and stromal compartments for ductal outgrowth. Represses transcription of the glucocorticoid receptor by binding to the cis-acting regulatory sequence 5'-GAGAAAAGAAACTGGAGAAACTC-3'; this function is however unclear and would need additional experimental evidences. This chain is Rho GTPase-activating protein 35, found in Canis lupus familiaris (Dog).